A 407-amino-acid chain; its full sequence is 12S rRNA N(4)-cytidine methyltransferase METTL15 (407 aa).

S-adenosyl-L-methionine contacts are provided by residues Gly100–His102, Asp119, Phe146, Asp169, and Gln176. Phosphoserine is present on Ser358.

It belongs to the methyltransferase superfamily. RsmH family.

The protein resides in the mitochondrion matrix. The enzyme catalyses cytidine(839) in 12S rRNA + S-adenosyl-L-methionine = N(4)-methylcytidine(839) in 12S rRNA + S-adenosyl-L-homocysteine + H(+). Its function is as follows. N4-methylcytidine (m4C) methyltransferase responsible for the methylation of position C839 in mitochondrial 12S rRNA. Involved in the stabilization of 12S rRNA folding, therefore facilitating the assembly of the mitochondrial small ribosomal subunits. The protein is 12S rRNA N(4)-cytidine methyltransferase METTL15 (METTL15) of Pongo abelii (Sumatran orangutan).